The sequence spans 256 residues: Ribonuclease 3 (256 aa).

The 123-residue stretch at 3–125 (LDALQQRLGY…IFGAVFLDGG (123 aa)) folds into the RNase III domain. Residue Glu38 participates in Mg(2+) binding. Asp42 is an active-site residue. Residues Asp111 and Glu114 each contribute to the Mg(2+) site. Residue Glu114 is part of the active site. The 71-residue stretch at 152-222 (DAKTLLQEYL…AKLALDEAHR (71 aa)) folds into the DRBM domain. Positions 226-256 (QLVKRSRAERTGKTRKQATPPDPQLSLRLKE) are disordered.

The protein belongs to the ribonuclease III family. As to quaternary structure, homodimer. The cofactor is Mg(2+).

It is found in the cytoplasm. The catalysed reaction is Endonucleolytic cleavage to 5'-phosphomonoester.. Functionally, digests double-stranded RNA. Involved in the processing of primary rRNA transcript to yield the immediate precursors to the large and small rRNAs (23S and 16S). Processes some mRNAs, and tRNAs when they are encoded in the rRNA operon. Processes pre-crRNA and tracrRNA of type II CRISPR loci if present in the organism. The chain is Ribonuclease 3 from Ralstonia pickettii (strain 12J).